The following is a 325-amino-acid chain: N-acetyl-gamma-glutamyl-phosphate reductase (325 aa).

Cys-135 is an active-site residue.

It belongs to the NAGSA dehydrogenase family. Type 1 subfamily.

The protein localises to the cytoplasm. The enzyme catalyses N-acetyl-L-glutamate 5-semialdehyde + phosphate + NADP(+) = N-acetyl-L-glutamyl 5-phosphate + NADPH + H(+). It participates in amino-acid biosynthesis; L-arginine biosynthesis; N(2)-acetyl-L-ornithine from L-glutamate: step 3/4. In terms of biological role, catalyzes the NADPH-dependent reduction of N-acetyl-5-glutamyl phosphate to yield N-acetyl-L-glutamate 5-semialdehyde. This is N-acetyl-gamma-glutamyl-phosphate reductase from Karelsulcia muelleri (strain GWSS) (Sulcia muelleri).